Reading from the N-terminus, the 84-residue chain is Putative membrane protein insertion efficiency factor (84 aa).

It belongs to the UPF0161 family.

Its subcellular location is the cell inner membrane. Its function is as follows. Could be involved in insertion of integral membrane proteins into the membrane. The polypeptide is Putative membrane protein insertion efficiency factor (Shewanella oneidensis (strain ATCC 700550 / JCM 31522 / CIP 106686 / LMG 19005 / NCIMB 14063 / MR-1)).